The sequence spans 82 residues: P2Y purinoceptor 2 (82 aa).

The chain crosses the membrane as a helical span at residues 1-25 (LPLSYGVVCVLGLCLNVVALYIFLC). Residues 26 to 35 (RLKTWNASTT) are Cytoplasmic-facing. A helical membrane pass occupies residues 36 to 56 (YMFHLAVSDSLYAASLPLLVY). The Extracellular portion of the chain corresponds to 57–75 (YYAQGDHWPFSTVLCKLVR). A helical transmembrane segment spans residues 76 to 82 (FLFYTNL).

It belongs to the G-protein coupled receptor 1 family. As to expression, expressed in brain, heart, stria vascularis and vestibular labyrinth.

It localises to the cell membrane. Functionally, receptor for ATP and UTP coupled to G-proteins that activate a phosphatidylinositol-calcium second messenger system. Not activated by UDP. This is P2Y purinoceptor 2 (P2RY2) from Meriones unguiculatus (Mongolian jird).